The primary structure comprises 525 residues: Ribosomal protein S6 kinase beta-1 (525 aa).

The TOS motif signature appears at 28–32 (FDIDL). The segment at 28–54 (FDIDLDQPEDAGSEDELEEGGQLNESM) is disordered. Acidic residues predominate over residues 30-46 (IDLDQPEDAGSEDELEE). A Protein kinase domain is found at 91–352 (FELLRVLGKG…AGEVQAHPFF (262 aa)). Residues 97-105 (LGKGGYGKV) and K123 contribute to the ATP site. Residue D218 is the Proton acceptor of the active site. T252 carries the post-translational modification Phosphothreonine; by PDPK1. In terms of domain architecture, AGC-kinase C-terminal spans 353 to 423 (RHINWEELLA…VAPSVLESVK (71 aa)). The tract at residues 380-399 (SQFDSKFTRQTPVDSPDDST) is disordered. Residues 381–399 (QFDSKFTRQTPVDSPDDST) are compositionally biased toward polar residues. S394 bears the Phosphoserine mark. T412 is subject to Phosphothreonine; by MTOR, NEK6 and NEK7. An autoinhibitory domain region spans residues 424–525 (EKFSFEPKIR…KRPEHLRMNL (102 aa)). S434 and S441 each carry phosphoserine. T444 is modified (phosphothreonine). Phosphoserine occurs at positions 447 and 452. Residues 486–509 (VTTSGEASAPLPIRQPNSGPYKKQ) are disordered. Position 516 is an N6-acetyllysine (K516).

Belongs to the protein kinase superfamily. AGC Ser/Thr protein kinase family. S6 kinase subfamily. Interacts with PPP1R9A/neurabin-1. Interacts with RPTOR. Interacts with IRS1. Interacts with EIF3B and EIF3C. Interacts with POLDIP3. Interacts with TRAF4. Interacts (via N-terminus) with IER5. Dephosphorylation by PPP1CC at Thr-412 in mitochondrion. Phosphorylation at Thr-412 is regulated by mTORC1. The phosphorylation at this site is maintained by an agonist-dependent autophosphorylation mechanism. Activated by phosphorylation at Thr-252 by PDPK1. In terms of tissue distribution, brain.

The protein resides in the cytoplasm. Its subcellular location is the synapse. The protein localises to the synaptosome. It localises to the mitochondrion outer membrane. It is found in the mitochondrion. The catalysed reaction is L-seryl-[protein] + ATP = O-phospho-L-seryl-[protein] + ADP + H(+). It catalyses the reaction L-threonyl-[protein] + ATP = O-phospho-L-threonyl-[protein] + ADP + H(+). Activation requires multiple phosphorylation events on serine/threonine residues. Activation appears to be first mediated by phosphorylation of multiple sites in the autoinhibitory domain, which facilitates phosphorylation at Thr-412, disrupting the autoinhibitory mechanism and allowing phosphorylation of Thr-252 by PDPK1. The active conformation of the kinase is believed to be stabilized by a mechanism involving three conserved phosphorylation sites located in the kinase domain activation loop (Thr-252) and in the AGC-kinase C-terminal domain (Ser-394 in the middle of the tail/linker region and Thr-412 within a hydrophobic motif at its end). Activated by mTORC1; isoform Alpha I and isoform Alpha II are sensitive to rapamycin, which inhibits activating phosphorylation at Thr-412. Activated by PDPK1. Functionally, serine/threonine-protein kinase that acts downstream of mTOR signaling in response to growth factors and nutrients to promote cell proliferation, cell growth and cell cycle progression. Regulates protein synthesis through phosphorylation of EIF4B, RPS6 and EEF2K, and contributes to cell survival by repressing the pro-apoptotic function of BAD. Under conditions of nutrient depletion, the inactive form associates with the EIF3 translation initiation complex. Upon mitogenic stimulation, phosphorylation by the mechanistic target of rapamycin complex 1 (mTORC1) leads to dissociation from the EIF3 complex and activation. The active form then phosphorylates and activates several substrates in the pre-initiation complex, including the EIF2B complex and the cap-binding complex component EIF4B. Also controls translation initiation by phosphorylating a negative regulator of EIF4A, PDCD4, targeting it for ubiquitination and subsequent proteolysis. Promotes initiation of the pioneer round of protein synthesis by phosphorylating POLDIP3/SKAR. In response to IGF1, activates translation elongation by phosphorylating EEF2 kinase (EEF2K), which leads to its inhibition and thus activation of EEF2. Also plays a role in feedback regulation of mTORC2 by mTORC1 by phosphorylating MAPKAP1/SIN1, MTOR and RICTOR, resulting in the inhibition of mTORC2 and AKT1 signaling. Also involved in feedback regulation of mTORC1 and mTORC2 by phosphorylating DEPTOR. Mediates cell survival by phosphorylating the pro-apoptotic protein BAD and suppressing its pro-apoptotic function. Phosphorylates mitochondrial URI1 leading to dissociation of a URI1-PPP1CC complex. The free mitochondrial PPP1CC can then dephosphorylate RPS6KB1 at Thr-412, which is proposed to be a negative feedback mechanism for the RPS6KB1 anti-apoptotic function. Mediates TNF-alpha-induced insulin resistance by phosphorylating IRS1 at multiple serine residues, resulting in accelerated degradation of IRS1. In cells lacking functional TSC1-2 complex, constitutively phosphorylates and inhibits GSK3B. May be involved in cytoskeletal rearrangement through binding to neurabin. Phosphorylates and activates the pyrimidine biosynthesis enzyme CAD, downstream of MTOR. Following activation by mTORC1, phosphorylates EPRS and thereby plays a key role in fatty acid uptake by adipocytes and also most probably in interferon-gamma-induced translation inhibition. In Rattus norvegicus (Rat), this protein is Ribosomal protein S6 kinase beta-1 (Rps6kb1).